The primary structure comprises 365 residues: DNA replication and repair protein RecF (365 aa).

30–37 (GLNGSGKT) is a binding site for ATP.

It belongs to the RecF family.

Its subcellular location is the cytoplasm. In terms of biological role, the RecF protein is involved in DNA metabolism; it is required for DNA replication and normal SOS inducibility. RecF binds preferentially to single-stranded, linear DNA. It also seems to bind ATP. The protein is DNA replication and repair protein RecF of Cellvibrio japonicus (strain Ueda107) (Pseudomonas fluorescens subsp. cellulosa).